The following is a 278-amino-acid chain: Large ribosomal subunit protein uL2 (278 aa).

Composition is skewed to basic residues over residues 210–219 (RKRWLGKRPQ) and 252–263 (KKSRGIKTRNSK). The interval 210–278 (RKRWLGKRPQ…LIIRHRKGNK (69 aa)) is disordered.

This sequence belongs to the universal ribosomal protein uL2 family. Part of the 50S ribosomal subunit. Forms a bridge to the 30S subunit in the 70S ribosome.

In terms of biological role, one of the primary rRNA binding proteins. Required for association of the 30S and 50S subunits to form the 70S ribosome, for tRNA binding and peptide bond formation. It has been suggested to have peptidyltransferase activity; this is somewhat controversial. Makes several contacts with the 16S rRNA in the 70S ribosome. The polypeptide is Large ribosomal subunit protein uL2 (Lactobacillus gasseri (strain ATCC 33323 / DSM 20243 / BCRC 14619 / CIP 102991 / JCM 1131 / KCTC 3163 / NCIMB 11718 / NCTC 13722 / AM63)).